The primary structure comprises 349 residues: AA9 family lytic polysaccharide monooxygenase C (349 aa).

A signal peptide spans 1–19 (MKSTFGLLALAAAAKLVSA). Positions 20 and 102 each coordinate Cu(2+). A disulfide bridge links cysteine 62 with cysteine 183. Histidine 169 is a binding site for O2. Cu(2+) is bound at residue tyrosine 180. The disordered stretch occupies residues 233 to 304 (DGSSSGSSGS…SGSNSGSDSC (72 aa)). Low complexity-rich tracts occupy residues 234–262 (GSSS…AAPT) and 269–304 (TSAT…SDSC). The region spanning 311 to 347 (GSVKIYGQCGGQNYSGPTSCEAGLICKEWNPYYHQCV) is the CBM1 domain. Intrachain disulfides connect cysteine 319–cysteine 336 and cysteine 330–cysteine 346. Asparagine 323 carries N-linked (GlcNAc...) asparagine glycosylation.

The protein belongs to the polysaccharide monooxygenase AA9 family. Cu(2+) is required as a cofactor.

It is found in the secreted. It carries out the reaction [(1-&gt;4)-beta-D-glucosyl]n+m + reduced acceptor + O2 = 4-dehydro-beta-D-glucosyl-[(1-&gt;4)-beta-D-glucosyl]n-1 + [(1-&gt;4)-beta-D-glucosyl]m + acceptor + H2O.. Functionally, lytic polysaccharide monooxygenase (LPMO) that depolymerizes crystalline and amorphous polysaccharides via the oxidation of scissile alpha- or beta-(1-4)-glycosidic bonds, yielding C4 oxidation products. Catalysis by LPMOs requires the reduction of the active-site copper from Cu(II) to Cu(I) by a reducing agent and H(2)O(2) or O(2) as a cosubstrate. Active on cellulose and cello-oligosaccharides, as well as plant cell wall-derived hemicellulosic polysaccharides. Also active on cello-oligosaccharides such as cellohexaose, cellopentaose or cellotetraose. This is AA9 family lytic polysaccharide monooxygenase C from Aspergillus fumigatus (strain ATCC MYA-4609 / CBS 101355 / FGSC A1100 / Af293) (Neosartorya fumigata).